A 546-amino-acid polypeptide reads, in one-letter code: Cryptochrome DASH, chloroplastic/mitochondrial (546 aa).

Residues 4–151 (TRVVIWFRND…TMERHWGSTL (148 aa)) enclose the Photolyase/cryptochrome alpha/beta domain. The tract at residues 497–546 (PRRDFTEMGSPPGPRRGGGGGGRGRGRPGGSTPNRGTKARVASVYDTVYG) is disordered. Gly residues predominate over residues 511–525 (RRGGGGGGRGRGRPG).

This sequence belongs to the DNA photolyase class-1 family. FAD serves as cofactor. Requires (6R)-5,10-methylene-5,6,7,8-tetrahydrofolate as cofactor.

Its subcellular location is the plastid. The protein resides in the chloroplast. The protein localises to the mitochondrion. Its function is as follows. May have a photoreceptor function. Binds ss- and ds-DNA in a sequence non-specific manner, lacks photolyase activity. The sequence is that of Cryptochrome DASH, chloroplastic/mitochondrial from Ostreococcus tauri.